Reading from the N-terminus, the 355-residue chain is Methylthioribose-1-phosphate isomerase (355 aa).

Residues 50 to 52 (RGA), arginine 93, and glutamine 198 each bind substrate. Catalysis depends on aspartate 239, which acts as the Proton donor. 249-250 (NK) contributes to the substrate binding site.

It belongs to the eIF-2B alpha/beta/delta subunits family. MtnA subfamily. Homodimer.

The enzyme catalyses 5-(methylsulfanyl)-alpha-D-ribose 1-phosphate = 5-(methylsulfanyl)-D-ribulose 1-phosphate. Its pathway is amino-acid biosynthesis; L-methionine biosynthesis via salvage pathway; L-methionine from S-methyl-5-thio-alpha-D-ribose 1-phosphate: step 1/6. Its function is as follows. Catalyzes the interconversion of methylthioribose-1-phosphate (MTR-1-P) into methylthioribulose-1-phosphate (MTRu-1-P). The chain is Methylthioribose-1-phosphate isomerase from Geobacillus kaustophilus (strain HTA426).